A 144-amino-acid chain; its full sequence is MKSYIAKAQEVERKWYVVDAAGKPLGRVASQVASILRGKNKPTFTPNVDCGDFVIVINAEKVVLTGKKLDQKMLRKHSLYAGGLKETPYREVLEKKPEFAFEEAVRRMLPTGVLGRKMLKKLNVYRGAEHDHAAQKPEVLELRY.

It belongs to the universal ribosomal protein uL13 family. In terms of assembly, part of the 50S ribosomal subunit.

In terms of biological role, this protein is one of the early assembly proteins of the 50S ribosomal subunit, although it is not seen to bind rRNA by itself. It is important during the early stages of 50S assembly. This chain is Large ribosomal subunit protein uL13, found in Clostridium perfringens (strain ATCC 13124 / DSM 756 / JCM 1290 / NCIMB 6125 / NCTC 8237 / Type A).